We begin with the raw amino-acid sequence, 254 residues long: Phosphoglycerate mutase 1 (254 aa).

Residues 10-17 (RHGESAWN) and 23-24 (SG) each bind substrate. Residue H11 is the Tele-phosphohistidine intermediate of the active site. S14 and S23 each carry phosphoserine. Y26 carries the post-translational modification Phosphotyrosine. Residue S31 is modified to Phosphoserine. Residues R62, 89–92 (ERHY), and K100 each bind substrate. E89 acts as the Proton donor/acceptor in catalysis. Residue K106 is modified to N6-acetyllysine. 116–117 (RR) is a substrate binding site. Phosphoserine is present on S118. 187-188 (GN) contributes to the substrate binding site. Position 251 is an N6-acetyllysine; alternate (K251). Position 251 is an N6-succinyllysine; alternate (K251). An N6-acetyllysine mark is found at K253 and K254.

The protein belongs to the phosphoglycerate mutase family. BPG-dependent PGAM subfamily. Homodimer. Post-translationally, acetylated at Lys-253, Lys-253 and Lys-254 under high glucose condition. Acetylation increases catalytic activity. Under glucose restriction SIRT1 levels dramatically increase and it deacetylates the enzyme.

The enzyme catalyses (2R)-2-phosphoglycerate = (2R)-3-phosphoglycerate. The catalysed reaction is (2R)-3-phospho-glyceroyl phosphate = (2R)-2,3-bisphosphoglycerate + H(+). Its function is as follows. Catalyzes the interconversion of 2-phosphoglycerate and 3-phosphoglyceratea crucial step in glycolysis, by using 2,3-bisphosphoglycerate. Also catalyzes the interconversion of (2R)-2,3-bisphosphoglycerate and (2R)-3-phospho-glyceroyl phosphate. The polypeptide is Phosphoglycerate mutase 1 (Pongo abelii (Sumatran orangutan)).